The primary structure comprises 582 residues: TBCC domain-containing protein 1 (582 aa).

Positions 140–153 (EWPSPRSRSPSSSS) are enriched in low complexity. The tract at residues 140 to 159 (EWPSPRSRSPSSSSSERDAK) is disordered. In terms of domain architecture, C-CAP/cofactor C-like spans 305 to 451 (PPGSRLVLMS…LWNQPLLFGV (147 aa)). Low complexity predominate over residues 547 to 558 (SLLPPTITPSSS). Residues 547–582 (SLLPPTITPSSSAEHWSSNQNTLKEQTHEQPTGTVC) form a disordered region. Positions 559 to 582 (AEHWSSNQNTLKEQTHEQPTGTVC) are enriched in polar residues.

This sequence belongs to the TBCC family.

The protein localises to the cytoplasm. The protein resides in the cytoskeleton. Its subcellular location is the microtubule organizing center. It localises to the centrosome. It is found in the spindle pole. Functionally, may play a role in the regulation of centrosome and Golgi apparatus positioning. In Danio rerio (Zebrafish), this protein is TBCC domain-containing protein 1 (tbccd1).